The chain runs to 66 residues: Beta-toxin Cb2 (66 aa).

Residues 1–66 (KEGYLVDLHT…VWPLPNKRCK (66 aa)) form the LCN-type CS-alpha/beta domain. 4 disulfides stabilise this stretch: Cys-12–Cys-65, Cys-16–Cys-41, Cys-25–Cys-46, and Cys-29–Cys-48.

Belongs to the long (4 C-C) scorpion toxin superfamily. Sodium channel inhibitor family. Beta subfamily. Expressed by the venom gland.

The protein localises to the secreted. Its function is as follows. Beta toxins bind voltage-independently at site-4 of sodium channels (Nav) and reduces peak current and shifts the voltage of activation toward more negative potentials thereby affecting sodium channel activation and promoting spontaneous and repetitive firing. Has an inhibitory effect on voltage-gated sodium channel hNav1.6/SCN8A, affecting both the activation and inactivation processes. Also reduces the peak current of hNav1.5/SCN5A but does not shift its voltage of activation. This toxin is active against mammals and lethal to mice. The chain is Beta-toxin Cb2 from Centruroides baergi (Scorpion).